The following is a 421-amino-acid chain: Lipid II:glycine glycyltransferase (421 aa).

Belongs to the FemABX family. Monomer.

It is found in the cytoplasm. The catalysed reaction is beta-D-GlcNAc-(1-&gt;4)-Mur2Ac(oyl-L-Ala-D-isoglutaminyl-L-Lys-D-Ala-D-Ala)-di-trans,octa-cis-undecaprenyl diphosphate + glycyl-tRNA(Gly) = beta-D-GlcNAc-(1-&gt;4)-Mur2Ac(oyl-L-Ala-D-isoglutaminyl-L-Lys-(N(6)-Gly)-D-Ala-D-Ala)-di-trans,octa-cis-undecaprenyl diphosphate + tRNA(Gly) + H(+). Catalyzes the incorporation of the first glycine of the pentaglycine interpeptide bridge, which is characteristic of the S.aureus peptidoglycan. This glycine is added to the epsilon-amino group of the L-lysine of the membrane-bound lipid II intermediate (GlcNAc-(beta-1,4)-N-acetylmuramic acid(-L-Ala-D-iGln-L-Lys-D-Ala-D-Ala)-pyrophosphoryl-undecaprenol), using glycyl-tRNA(Gly) as donor, in a ribosome-independent mechanism. Involved in methicillin resistance. The sequence is that of Lipid II:glycine glycyltransferase (femX) from Staphylococcus aureus (strain USA300).